A 135-amino-acid chain; its full sequence is RxLR effector protein Avr10 (135 aa).

Residues 1 to 19 (MRLSFIIFAISLLAGGSGA) form the signal peptide. A compositionally biased stretch (polar residues) spans 34-43 (GTNQGASTGK). A disordered region spans residues 34-64 (GTNQGASTGKRSLRYDNNAERAGEEDDEERA). Positions 44 to 63 (RSLRYDNNAERAGEEDDEER) match the RxLR-dEER motif. Over residues 46–55 (LRYDNNAERA) the composition is skewed to basic and acidic residues.

Belongs to the RxLR effector family.

Its subcellular location is the secreted. It localises to the host nucleus. It is found in the host cytoplasm. Functionally, secreted effector that acts as an elicitor of hypersensitive response (HR) specifically on plants carrying defense protein R10. Enhances P.infestans colonization of Nicotiana benthamiana leaves. This is RxLR effector protein Avr10 from Phytophthora infestans (strain T30-4) (Potato late blight agent).